A 26-amino-acid polypeptide reads, in one-letter code: L-amino-acid oxidase (26 aa).

It belongs to the flavin monoamine oxidase family. In terms of assembly, monomer. Requires FAD as cofactor. Not glycosylated. As to expression, expressed by the ink gland.

Its subcellular location is the secreted. The catalysed reaction is an L-alpha-amino acid + O2 + H2O = a 2-oxocarboxylate + H2O2 + NH4(+). Catalyzes the oxidative deamination of positively charged L-amino acids L-Lys and L-Arg but not of amino acids L-His, L-Asp or L-Glu. Has antibacterial activity against the Gram-positive bacterium S.aureus (MIC=15 ug/ml). This antibacterial activity is bacteriostatic in the absence of amino acids L-Lys or L-Arg but bactericidal in their presence. The antibacterial effect is largely dependent on H(2)O(2) produced in the oxidative deamination of substrates. Has hemagglutinating activity towards rabbit erythrocytes. Hemagglutinating activity is inhibited by the glycoprotein fetuin, but not by glucose, mannose, galactose, N-acetylglucosamine, N-acetylgalactosamine or sialic acid. The polypeptide is L-amino-acid oxidase (Aplysia dactylomela (Spotted sea hare)).